The primary structure comprises 115 residues: U3-lycotoxin-Ls1b (115 aa).

A signal peptide spans 1–20 (MKFVLLFGVLLVTLFSYSSA). Positions 21-44 (EMLDDFDQADEDELLSLIEKEEAR) are excised as a propeptide. Intrachain disulfides connect Cys48–Cys63, Cys55–Cys72, Cys62–Cys87, and Cys74–Cys85.

This sequence belongs to the neurotoxin 19 (CSTX) family. 01 subfamily. In terms of tissue distribution, expressed by the venom gland.

The protein resides in the secreted. In Lycosa singoriensis (Wolf spider), this protein is U3-lycotoxin-Ls1b.